Here is a 334-residue protein sequence, read N- to C-terminus: GTP 3',8-cyclase (334 aa).

The 227-residue stretch at 13–239 (KFHRKFYYLR…KVRSHHDGPA (227 aa)) folds into the Radical SAM core domain. Arginine 22 is a GTP binding site. [4Fe-4S] cluster is bound by residues cysteine 29 and cysteine 33. Tyrosine 35 lines the S-adenosyl-L-methionine pocket. Cysteine 36 provides a ligand contact to [4Fe-4S] cluster. Arginine 73 serves as a coordination point for GTP. Glycine 77 is a binding site for S-adenosyl-L-methionine. Threonine 104 is a binding site for GTP. Serine 128 contacts S-adenosyl-L-methionine. Residue lysine 165 coordinates GTP. Methionine 199 provides a ligand contact to S-adenosyl-L-methionine. Cysteine 262 and cysteine 265 together coordinate [4Fe-4S] cluster. 267 to 269 (RLR) is a binding site for GTP. Residue cysteine 279 coordinates [4Fe-4S] cluster.

This sequence belongs to the radical SAM superfamily. MoaA family. Monomer and homodimer. [4Fe-4S] cluster is required as a cofactor.

It carries out the reaction GTP + AH2 + S-adenosyl-L-methionine = (8S)-3',8-cyclo-7,8-dihydroguanosine 5'-triphosphate + 5'-deoxyadenosine + L-methionine + A + H(+). The protein operates within cofactor biosynthesis; molybdopterin biosynthesis. Functionally, catalyzes the cyclization of GTP to (8S)-3',8-cyclo-7,8-dihydroguanosine 5'-triphosphate. The sequence is that of GTP 3',8-cyclase from Vibrio parahaemolyticus serotype O3:K6 (strain RIMD 2210633).